A 501-amino-acid chain; its full sequence is L-ornithine N(5)-monooxygenase (501 aa).

Positions 1–31 (MESVERKSESSYLGMRNMQPEQRLSLDPPRL) are disordered. FAD-binding positions include 83 to 91 (ERQKQFAWH) and glutamine 102. Residue lysine 107 coordinates substrate. Valine 168 serves as a coordination point for FAD. NADP(+) is bound by residues 254 to 257 (SGQS) and arginine 279. Substrate-binding positions include 293–296 (NEIF) and asparagine 323. 323-325 (NYS) serves as a coordination point for NADP(+). The tract at residues 366–390 (EHHGPQSRMRIHLKSSKPESEGAAN) is disordered. Over residues 381–390 (SKPESEGAAN) the composition is skewed to basic and acidic residues. Residue 466-468 (SLL) participates in FAD binding. Serine 469 lines the substrate pocket.

Belongs to the lysine N(6)-hydroxylase/L-ornithine N(5)-oxygenase family. Homotetramer. Requires FAD as cofactor.

The catalysed reaction is L-ornithine + NADPH + O2 = N(5)-hydroxy-L-ornithine + NADP(+) + H2O. It carries out the reaction L-ornithine + NADH + O2 = N(5)-hydroxy-L-ornithine + NAD(+) + H2O. It functions in the pathway siderophore biosynthesis; ferrichrome biosynthesis. In terms of biological role, L-ornithine N(5)-monooxygenase; part of the siderophore biosynthetic pathway. Aspergillus fumigatus produces four types of siderophores, low-molecular-mass iron chelators, including excreted fusarinine C (FsC) and triacetylfusarinine C (TAFC) for iron uptake; and intacellular ferricrocin (FC) for hyphal and hydroxyferricrocin (HFC) for conidial iron distribution and storage. TAFC consists of three N(2)-acetyl-N(5)-anhydromevalonyl-N(5)-hydroxyornithine residues cyclically linked by ester bonds; FC is a cyclic hexapeptide with the structure Gly-Ser-Gly-(N(5)-acetyl-N(5)-hydroxyornithine)x3. The biosynthesis of all four siderophores depends on the hydroxylation of ornithine, catalyzed by the monooxygenase sidA. SidA is highly specific for its substrate, only hydrolyzing l-ornithine, and has preference for NADPH over NADH, NADPH playing a role in stabilization of the C4a-hydroperoxyflavin intermediate. Subsequently, the pathways for biosynthesis of extra- and intracellular siderophores split. For biosynthesis of extracellular siderophores, the transacylase sidF transfers anhydromevalonyl to N(5)-hydroxyornithine. The required anhydromevalonyl-CoA moiety is derived from mevalonate by CoA ligation and dehydration catalyzed by sidI and sidH respectively. The acetylation of N(5)-hydroxyornithine for FC biosynthesis involves the constitutively expressed sidL. FC is hydroxylated to HFC by an as yet uncharacterized enzyme during conidiation. Assembly of fusarinine C (FsC) and FC is catalyzed by two different nonribosomal peptide synthetases (NRPS), sidD and sidC respectively. Subsequently, sidG catalyzes N2-acetylation of FsC for forming TAFC. Both extra- and intracellular siderophores are crucial for growth during iron limitation and virulence. This Aspergillus fumigatus (strain ATCC MYA-4609 / CBS 101355 / FGSC A1100 / Af293) (Neosartorya fumigata) protein is L-ornithine N(5)-monooxygenase.